The primary structure comprises 261 residues: Eukaryotic translation initiation factor 3 subunit G (261 aa).

Residues 156 to 180 are disordered; the sequence is QDADSKNALGLRGDGRQMERNRSDE. The segment covering 168-180 has biased composition (basic and acidic residues); the sequence is GDGRQMERNRSDE. Residues 181–259 form the RRM domain; the sequence is NTCRVTNLPQ…MVLKVEWTRP (79 aa).

Belongs to the eIF-3 subunit G family. Component of the eukaryotic translation initiation factor 3 (eIF-3) complex.

It is found in the cytoplasm. Functionally, RNA-binding component of the eukaryotic translation initiation factor 3 (eIF-3) complex, which is involved in protein synthesis of a specialized repertoire of mRNAs and, together with other initiation factors, stimulates binding of mRNA and methionyl-tRNAi to the 40S ribosome. The eIF-3 complex specifically targets and initiates translation of a subset of mRNAs involved in cell proliferation. This subunit can bind 18S rRNA. The protein is Eukaryotic translation initiation factor 3 subunit G of Caenorhabditis briggsae.